Reading from the N-terminus, the 442-residue chain is tRNA-2-methylthio-N(6)-dimethylallyladenosine synthase (442 aa).

Positions 2–120 (KKVFIRTFGC…LPKMIVDKET (119 aa)) constitute an MTTase N-terminal domain. [4Fe-4S] cluster contacts are provided by Cys11, Cys49, Cys83, Cys157, Cys161, and Cys164. The region spanning 143-375 (RVEGGAAFVS…NEVIEAETAR (233 aa)) is the Radical SAM core domain. The 64-residue stretch at 378–441 (QTMIGTVQRC…TFSLRGKIVE (64 aa)) folds into the TRAM domain.

It belongs to the methylthiotransferase family. MiaB subfamily. In terms of assembly, monomer. The cofactor is [4Fe-4S] cluster.

The protein localises to the cytoplasm. The catalysed reaction is N(6)-dimethylallyladenosine(37) in tRNA + (sulfur carrier)-SH + AH2 + 2 S-adenosyl-L-methionine = 2-methylsulfanyl-N(6)-dimethylallyladenosine(37) in tRNA + (sulfur carrier)-H + 5'-deoxyadenosine + L-methionine + A + S-adenosyl-L-homocysteine + 2 H(+). Its function is as follows. Catalyzes the methylthiolation of N6-(dimethylallyl)adenosine (i(6)A), leading to the formation of 2-methylthio-N6-(dimethylallyl)adenosine (ms(2)i(6)A) at position 37 in tRNAs that read codons beginning with uridine. The protein is tRNA-2-methylthio-N(6)-dimethylallyladenosine synthase of Neisseria meningitidis serogroup A / serotype 4A (strain DSM 15465 / Z2491).